The primary structure comprises 480 residues: Phosphomethylpyrimidine synthase (480 aa).

Residues N66, M95, Y124, H159, 179-181 (SRG), 220-223 (DGLR), and E259 each bind substrate. H263 provides a ligand contact to Zn(2+). Y286 serves as a coordination point for substrate. H327 contributes to the Zn(2+) binding site. [4Fe-4S] cluster contacts are provided by C407, C410, and C415. A disordered region spans residues 426 to 480 (DGDMESIEADADDRTPLEDSSAAAVNRPPVGTHDGADIPGPDADMPADTEGSADD). The segment covering 470–480 (MPADTEGSADD) has biased composition (acidic residues).

Belongs to the ThiC family. Requires [4Fe-4S] cluster as cofactor.

It carries out the reaction 5-amino-1-(5-phospho-beta-D-ribosyl)imidazole + S-adenosyl-L-methionine = 4-amino-2-methyl-5-(phosphooxymethyl)pyrimidine + CO + 5'-deoxyadenosine + formate + L-methionine + 3 H(+). It functions in the pathway cofactor biosynthesis; thiamine diphosphate biosynthesis. Catalyzes the synthesis of the hydroxymethylpyrimidine phosphate (HMP-P) moiety of thiamine from aminoimidazole ribotide (AIR) in a radical S-adenosyl-L-methionine (SAM)-dependent reaction. The protein is Phosphomethylpyrimidine synthase of Haloarcula marismortui (strain ATCC 43049 / DSM 3752 / JCM 8966 / VKM B-1809) (Halobacterium marismortui).